A 340-amino-acid chain; its full sequence is Methionine import ATP-binding protein MetN 2 (340 aa).

An ABC transporter domain is found at 2–241; sequence ITLQNVVKEY…PQEKVTQRFV (240 aa). Residue 38 to 45 participates in ATP binding; it reads GYSGAGKS.

The protein belongs to the ABC transporter superfamily. Methionine importer (TC 3.A.1.24) family. The complex is composed of two ATP-binding proteins (MetN), two transmembrane proteins (MetI) and a solute-binding protein (MetQ).

It is found in the cell membrane. The catalysed reaction is L-methionine(out) + ATP + H2O = L-methionine(in) + ADP + phosphate + H(+). The enzyme catalyses D-methionine(out) + ATP + H2O = D-methionine(in) + ADP + phosphate + H(+). In terms of biological role, part of the ABC transporter complex MetNIQ involved in methionine import. Responsible for energy coupling to the transport system. The chain is Methionine import ATP-binding protein MetN 2 from Listeria monocytogenes serotype 4b (strain F2365).